A 283-amino-acid polypeptide reads, in one-letter code: Bifunctional protein FolD (283 aa).

NADP(+)-binding positions include 166-168 (GRS) and Ser191.

Belongs to the tetrahydrofolate dehydrogenase/cyclohydrolase family. Homodimer.

It carries out the reaction (6R)-5,10-methylene-5,6,7,8-tetrahydrofolate + NADP(+) = (6R)-5,10-methenyltetrahydrofolate + NADPH. The catalysed reaction is (6R)-5,10-methenyltetrahydrofolate + H2O = (6R)-10-formyltetrahydrofolate + H(+). It participates in one-carbon metabolism; tetrahydrofolate interconversion. Functionally, catalyzes the oxidation of 5,10-methylenetetrahydrofolate to 5,10-methenyltetrahydrofolate and then the hydrolysis of 5,10-methenyltetrahydrofolate to 10-formyltetrahydrofolate. The protein is Bifunctional protein FolD of Pediococcus pentosaceus (strain ATCC 25745 / CCUG 21536 / LMG 10740 / 183-1w).